Consider the following 72-residue polypeptide: uncharacterized protein (72 aa).

This is an uncharacterized protein from Rickettsia conorii (strain ATCC VR-613 / Malish 7).